The chain runs to 92 residues: Small ribosomal subunit protein uS19 (92 aa).

The protein belongs to the universal ribosomal protein uS19 family.

Functionally, protein S19 forms a complex with S13 that binds strongly to the 16S ribosomal RNA. In Proteus mirabilis (strain HI4320), this protein is Small ribosomal subunit protein uS19.